Consider the following 225-residue polypeptide: Dimerizing cyclase tstC (225 aa).

A signal peptide spans 1 to 19; that stretch reads MRLSTLSSLLLGSSSIVFA. N-linked (GlcNAc...) asparagine glycosylation is found at Asn146, Asn195, and Asn217.

This sequence belongs to the dimerizing cyclase tstC family.

It carries out the reaction 2 [4-(deca-1,8-diyl)-2,5-dioxo-2,5-dihydro-3-furanyl]acetate + H(+) = 2-[(1R,8S,14R,15R)-11-hydroxy-14,15-bis[(6E)-oct-6-en-1-yl]-3,5,9-trioxo-4,10-dioxatetracyclo[9.4.0.0(2,6).0(8,12)]pentadeca-2(6),12-dien-8-yl]acetate + CO2. Its pathway is secondary metabolite biosynthesis. In terms of biological role, dimerizing cyclase; part of the gene cluster that mediates the biosynthesis of the antihypercholesterolemic agents phomoidrides which are dimeric anhydrides. Within the pathway, tstC produces the bicyclo[4.3.1]deca-1,6-diene core of phomoidrides via the dimerization of the monomeric anhydrides leading to prephomoidride. The pathway begins with the highly reducing polyketide synthase tstA that catalyzes the formation of a C12-fatty acyl-ACP, starting from one acetate and 5 malonate units. The hydrolase tstM is involved in the release of the C12-fatty acyl chain from phiA. The alkylcitrate synthase (ACS) tstJ and the alkylcitrate dehydratase (ACDH) tstI then give rise to decarboxylated monomeric anhydrides by coupling the C12-fatty acyl chain with oxalacetic acid. The cyclase tstC is responsible for the dimerization of the monomeric anhydrides which leads to the production of prephomoidride that contains the characteristic bicyclo[4.3.1]deca-1,6-diene system of phomoidrides. Iterative oxidation catalyzed by the alpha-ketoglutarate-dependent dioxygenase tstK produced then phomoidride A. Finally, the methyltransferase tstE converts phomoidride A to phomoidride B via an acetalization reaction. The phosphatidylethanolamine-binding protein tstB and tstN are not essential for dimerization and their functions have still to be determined. In Talaromyces stipitatus (strain ATCC 10500 / CBS 375.48 / QM 6759 / NRRL 1006) (Penicillium stipitatum), this protein is Dimerizing cyclase tstC.